The chain runs to 739 residues: Tegument protein UL47 (739 aa).

Over residues 1–13 (MDAARDGRPERRR) the composition is skewed to basic and acidic residues. Disordered stretches follow at residues 1–123 (MDAA…QDYL) and 154–198 (QFPP…DDAA). The short motif at 10 to 30 (ERRRAVSGTYRTHPFQRPSAR) is the Nuclear localization signal element. Over residues 28–53 (SARRSAGRPARCGRRGRGAPRVRRPR) the composition is skewed to basic residues. The span at 62–87 (EDTSEDENVYDYIDGDSSDSADDYDS) shows a compositional bias: acidic residues. Residues 94–121 (RGPNHGAGDAMDTDAPPERAPEGGAPQD) carry the Nuclear export signal motif. The Nuclear export signal signature appears at 483 to 493 (LSAYLTLFVAL).

Belongs to the alphaherpesvirinae HHV-1 UL47 family. Interacts with US3 kinase. Interacts with UL31 and UL34; these interactions seem important for efficient virion nuclear egress. Interacts with UL41/VHS. Interacts with host DDB1. Post-translationally, monoubiquitinated. In terms of processing, phosphorylated by US3. This phosphorylation is required for proper nuclear localization.

The protein resides in the virion tegument. It localises to the host nucleus. It is found in the host cytoplasm. In terms of biological role, tegument protein that can bind to various RNA transcripts. Plays a role in the attenuation of selective viral and cellular mRNA degradation by modulating the activity of host shutoff RNase UL41/VHS. Also plays a role in the primary envelopment of virions in the perinuclear space, probably by interacting with two nuclear egress proteins UL31 and UL34. This Bovine herpesvirus 1.1 (strain Cooper) (BoHV-1) protein is Tegument protein UL47.